The following is a 360-amino-acid chain: S-adenosylmethionine decarboxylase proenzyme (360 aa).

Catalysis depends on residues Glu13 and Glu16. Ser73 serves as the catalytic Schiff-base intermediate with substrate; via pyruvic acid. Ser73 carries the post-translational modification Pyruvic acid (Ser); by autocatalysis. Residue Cys87 is the Proton donor; for catalytic activity of the active site. Catalysis depends on proton acceptor; for processing activity residues Ser236 and His249.

It belongs to the eukaryotic AdoMetDC family. Pyruvate is required as a cofactor. Post-translationally, is synthesized initially as an inactive proenzyme. Formation of the active enzyme involves a self-maturation process in which the active site pyruvoyl group is generated from an internal serine residue via an autocatalytic post-translational modification. Two non-identical subunits are generated from the proenzyme in this reaction, and the pyruvate is formed at the N-terminus of the alpha chain, which is derived from the carboxyl end of the proenzyme. The post-translation cleavage follows an unusual pathway, termed non-hydrolytic serinolysis, in which the side chain hydroxyl group of the serine supplies its oxygen atom to form the C-terminus of the beta chain, while the remainder of the serine residue undergoes an oxidative deamination to produce ammonia and the pyruvoyl group blocking the N-terminus of the alpha chain. As to expression, stolon, also expressed in leaves, stems and roots.

It carries out the reaction S-adenosyl-L-methionine + H(+) = S-adenosyl 3-(methylsulfanyl)propylamine + CO2. It functions in the pathway amine and polyamine biosynthesis; S-adenosylmethioninamine biosynthesis; S-adenosylmethioninamine from S-adenosyl-L-methionine: step 1/1. The polypeptide is S-adenosylmethionine decarboxylase proenzyme (SAMDC) (Solanum tuberosum (Potato)).